The chain runs to 211 residues: Probable nicotinate-nucleotide adenylyltransferase (211 aa).

It belongs to the NadD family.

It carries out the reaction nicotinate beta-D-ribonucleotide + ATP + H(+) = deamido-NAD(+) + diphosphate. It participates in cofactor biosynthesis; NAD(+) biosynthesis; deamido-NAD(+) from nicotinate D-ribonucleotide: step 1/1. In terms of biological role, catalyzes the reversible adenylation of nicotinate mononucleotide (NaMN) to nicotinic acid adenine dinucleotide (NaAD). This Wigglesworthia glossinidia brevipalpis protein is Probable nicotinate-nucleotide adenylyltransferase.